A 265-amino-acid chain; its full sequence is DNA-binding dual transcriptional regulator Rns (265 aa).

Decanoate-binding residues include His-20 and Arg-75. The region spanning 164–261 (DKVRNLIEKD…GVTPKQFFTY (98 aa)) is the HTH araC/xylS-type domain. DNA-binding regions (H-T-H motif) lie at residues 181 to 202 (GIIA…ESEN) and 228 to 251 (ISQI…NKHY).

Homodimer; each subunit binds one decanoate molecule.

It is found in the cytoplasm. With respect to regulation, rns-dependent expression of pilins and outer membrane proteins CexE-alpha and CexE-epsilon are inhibited in vivo by decanoic acid (decanoate); has no effect on expression of DnaK or flagellins. Decanoate relieves Rns-dependent repression of nlpA. Its function is as follows. A transcription factor required for the expression of the CS1 and CS2 adhesins of enterotoxigenic E.coli. Required for expression of pilins and some outer membrane lipoproteins. Represses expression of nlpA. The polypeptide is DNA-binding dual transcriptional regulator Rns (Escherichia coli).